We begin with the raw amino-acid sequence, 689 residues long: Ribonuclease J (689 aa).

The tract at residues Met1–Ser88 is disordered. Positions Glu9–Arg24 are enriched in basic and acidic residues. Over residues His56–Thr78 the composition is skewed to basic residues. N6-acetyllysine occurs at positions 132 and 138. His206, His208, Asp210, His211, His275, and Asp297 together coordinate Zn(2+). N6-acetyllysine is present on residues Lys321, Lys335, and Lys395. His498–His502 provides a ligand contact to substrate. Residue Lys509 is modified to N6-acetyllysine. His524 is a Zn(2+) binding site. 3 positions are modified to N6-acetyllysine: Lys545, Lys632, and Lys647.

It belongs to the metallo-beta-lactamase superfamily. RNA-metabolizing metallo-beta-lactamase-like family. Bacterial RNase J subfamily. As to quaternary structure, homodimer. Homotetramer; dimer of homodimers. Interacts with RNA helicase RhpA, might be a member of a minimal RNA degradosome complex. Zn(2+) is required as a cofactor. Acetylated on nine lysine residues. Some of the residues are acetylated by multiple different mechanisms. RimL is partially responsible for the acetylation of Lys-321, Lys-395 and Lys-647. HPB8_1270 homolog is partially responsible for the acetylation of Lys-321, Lys-395, Lys-509 and Lys-647. Acetyl-phosphate-mediated non-enzymatic acetylation pathway takes part in the acetylation of Lys-132, Lys-321, Lys-395, Lys-509 and Lys-647. Acetylation of the remaining residues Lys-138, Lys-335, Lys-545 and Lys-632 occurs by a yet undetermined mechanism. Acetylation on a number of these residues is important for growth regulation and proper cell morphology.

Its subcellular location is the cytoplasm. Its activity is regulated as follows. Catalytic activity is regulated by the balance between homodimers and homotetramers, with homotetramers being the active forms of this enzyme. Acetylation allosterically regulates the homooligomerization state and hence the catalytic activity. Its function is as follows. An RNase that has 5'-3' exoribonuclease and endoribonuclease activity. Degrades 5'-monophosphorylated ssRNA and dsRNA, considerably more active on ssRNA. Association with RhpA significantly increases the dsRNase activity. Degrades RNA substrate with hairpin structures at both ends with low activity, but presence of RhpA significantly increases the activity on this substrate. Stimulates ATPase activity of RNA helicase RhpA. Involved in stabilization of mRNA but apparently not rRNA. In Helicobacter pylori (strain ATCC 700392 / 26695) (Campylobacter pylori), this protein is Ribonuclease J.